The chain runs to 142 residues: Hemoglobin subunit beta-C (142 aa).

The Globin domain maps to 2–142; that stretch reads PNKALITGFW…VASALAHRYH (141 aa). Residues H59 and H88 each contribute to the heme b site.

Belongs to the globin family. Heterotetramer of two alpha chains and two beta chains. As to expression, red blood cells.

In terms of biological role, involved in oxygen transport from the lung to the various peripheral tissues. In Ovis aries (Sheep), this protein is Hemoglobin subunit beta-C (HBBC).